A 123-amino-acid chain; its full sequence is Gamma-synuclein (123 aa).

Repeat copies occupy residues 20–30 (EKTKQGVTEAA) and 31–41 (EKTKEGVMYVG). The 4 X 11 AA tandem repeats of [EGSA]-K-T-K-[EQ]-[GQ]-V-X(4) stretch occupies residues 20–67 (EKTKQGVTEAAEKTKEGVMYVGTKTKENVVQSVTSVAEKTKEQANAVS). A 3; approximate repeat occupies 42–56 (TKTKENVVQSVTSVA). Copy 4 of the repeat occupies 57–67 (EKTKEQANAVS). Phosphoserine occurs at positions 67 and 72. Residues 91–123 (TTGVVRKEDLEPPAQDQEAKEQEENEEAKSGED) form a disordered region. A compositionally biased stretch (basic and acidic residues) spans 107–123 (QEAKEQEENEEAKSGED). Residue Ser-120 is modified to Phosphoserine; by BARK1, CaMK2 and CK2.

It belongs to the synuclein family. May be a centrosome-associated protein. Interacts with MYOC; affects its secretion and its aggregation. Post-translationally, phosphorylated. Phosphorylation by GRK5 appears to occur on residues distinct from the residue phosphorylated by other kinases. As to expression, highly expressed in brain, particularly in the substantia nigra. Also expressed in the corpus callosum, heart, skeletal muscle, ovary, testis, colon and spleen. Weak expression in pancreas, kidney and lung. Expressed predominantly in the cell bodies and axons of primary sensory neurons, sympathetic neurons and motoneurons.

It is found in the cytoplasm. It localises to the perinuclear region. Its subcellular location is the cytoskeleton. The protein resides in the microtubule organizing center. The protein localises to the centrosome. It is found in the spindle. Plays a role in neurofilament network integrity. May be involved in modulating axonal architecture during development and in the adult. In vitro, increases the susceptibility of neurofilament-H to calcium-dependent proteases. May also function in modulating the keratin network in skin. Activates the MAPK and Elk-1 signal transduction pathway. This Mus musculus (Mouse) protein is Gamma-synuclein (Sncg).